The primary structure comprises 60 residues: Large ribosomal subunit protein uL30 (60 aa).

It belongs to the universal ribosomal protein uL30 family. In terms of assembly, part of the 50S ribosomal subunit.

The sequence is that of Large ribosomal subunit protein uL30 from Finegoldia magna (strain ATCC 29328 / DSM 20472 / WAL 2508) (Peptostreptococcus magnus).